The sequence spans 675 residues: Mitochondrial distribution and morphology protein 12 (675 aa).

Residues 1 to 675 form the SMP-LTD domain; the sequence is MSIDLNWDTV…VYPSFWTFLV (675 aa). Disordered regions lie at residues 66-186, 241-270, 307-327, 365-390, and 444-517; these read LPDF…GTNH, GPSWIADQQQQQQQQNNMLPGGAGGGGAGG, GTGKPTPGPSPLTGTSTPLGT, TGPRHKRNPSSQSLNSVGDYSPVAPA, and PKQG…RFRE. Acidic residues predominate over residues 78–101; sequence SSEESDSEEEVAYENEGEYLDDPV. A compositionally biased stretch (low complexity) spans 123 to 137; sequence NSSTGSRNGSGPNSG. Over residues 261–270 the composition is skewed to gly residues; the sequence is GGAGGGGAGG. A compositionally biased stretch (low complexity) spans 317–327; it reads PLTGTSTPLGT. Composition is skewed to polar residues over residues 373-382 and 454-469; these read PSSQSLNSVG and VSTLAPNSAGTSNNRA. A compositionally biased stretch (acidic residues) spans 497-510; the sequence is EPEEDEEEEEEGEE.

It belongs to the MDM12 family. Component of the ER-mitochondria encounter structure (ERMES) or MDM complex, composed of mmm-1, mdm10, mdm12 and mdm34. A mmm-1 homodimer associates with one molecule of mdm12 on each side in a pairwise head-to-tail manner, and the SMP-LTD domains of mmm-1 and mdm12 generate a continuous hydrophobic tunnel for phospholipid trafficking.

It localises to the mitochondrion outer membrane. The protein resides in the endoplasmic reticulum membrane. Functionally, component of the ERMES/MDM complex, which serves as a molecular tether to connect the endoplasmic reticulum (ER) and mitochondria. Components of this complex are involved in the control of mitochondrial shape and protein biogenesis, and function in nonvesicular lipid trafficking between the ER and mitochondria. Mdm12 is required for the interaction of the ER-resident membrane protein MMM1 and the outer mitochondrial membrane-resident beta-barrel protein mdm10. The mdm12-mmm-1 subcomplex functions in the major beta-barrel assembly pathway that is responsible for biogenesis of all mitochondrial outer membrane beta-barrel proteins, and acts in a late step after the SAM complex. The mdm10-mdm12-mmm-1 subcomplex further acts in the TOM40-specific pathway after the action of the mdm12-mmm1 complex. Essential for establishing and maintaining the structure of mitochondria and maintenance of mtDNA nucleoids. The chain is Mitochondrial distribution and morphology protein 12 from Neurospora crassa (strain ATCC 24698 / 74-OR23-1A / CBS 708.71 / DSM 1257 / FGSC 987).